Here is a 77-residue protein sequence, read N- to C-terminus: MSRNPIERCIRDSLDTYYRDLDGENPSNVYDMVLQAIERPLLETVMEWASNNQSLAADYLGINRNTLRKKLQQHGLL.

Residues 53 to 72 constitute a DNA-binding region (H-T-H motif); sequence QSLAADYLGINRNTLRKKLQ.

The protein belongs to the transcriptional regulatory Fis family.

In Ralstonia nicotianae (strain ATCC BAA-1114 / GMI1000) (Ralstonia solanacearum), this protein is Putative Fis-like DNA-binding protein.